An 83-amino-acid polypeptide reads, in one-letter code: Mitochondrial import inner membrane translocase subunit Tim8 B (83 aa).

The residue at position 2 (Ala2) is an N-acetylalanine. Positions 36 to 59 (CWDKCVEKPGSRLDSRTENCLSSC) match the Twin CX3C motif motif. 2 cysteine pairs are disulfide-bonded: Cys36–Cys59 and Cys40–Cys55.

This sequence belongs to the small Tim family. Heterohexamer; possibly composed of 3 copies of TIMM8B and 3 copies of TIMM13, named soluble 70 kDa complex. Associates with the TIM22 complex, whose core is composed of TIMM22.

The protein localises to the mitochondrion inner membrane. Its function is as follows. Probable mitochondrial intermembrane chaperone that participates in the import and insertion of some multi-pass transmembrane proteins into the mitochondrial inner membrane. Also required for the transfer of beta-barrel precursors from the TOM complex to the sorting and assembly machinery (SAM complex) of the outer membrane. Acts as a chaperone-like protein that protects the hydrophobic precursors from aggregation and guide them through the mitochondrial intermembrane space. The chain is Mitochondrial import inner membrane translocase subunit Tim8 B (Timm8b) from Mus musculus (Mouse).